Consider the following 590-residue polypeptide: Aspartate--tRNA(Asp/Asn) ligase (590 aa).

Residue glutamate 175 coordinates L-aspartate. The interval 199 to 202 (QQYK) is aspartate. Positions 221 and 450 each coordinate L-aspartate. Position 221–223 (221–223 (RDE)) interacts with ATP. Glutamate 484 is a binding site for ATP. Arginine 491 is an L-aspartate binding site. 536-539 (GVDR) contacts ATP.

Belongs to the class-II aminoacyl-tRNA synthetase family. Type 1 subfamily. In terms of assembly, homodimer.

It is found in the cytoplasm. It catalyses the reaction tRNA(Asx) + L-aspartate + ATP = L-aspartyl-tRNA(Asx) + AMP + diphosphate. Aspartyl-tRNA synthetase with relaxed tRNA specificity since it is able to aspartylate not only its cognate tRNA(Asp) but also tRNA(Asn). Reaction proceeds in two steps: L-aspartate is first activated by ATP to form Asp-AMP and then transferred to the acceptor end of tRNA(Asp/Asn). In Rhodopseudomonas palustris (strain HaA2), this protein is Aspartate--tRNA(Asp/Asn) ligase.